A 386-amino-acid chain; its full sequence is TRIBOA-glucoside O-methyltransferase BX7 (386 aa).

S-adenosyl-L-methionine contacts are provided by Gly224, Asp248, Met270, and Lys283. The Proton acceptor role is filled by His287.

Belongs to the class I-like SAM-binding methyltransferase superfamily. Cation-independent O-methyltransferase family. COMT subfamily. As to expression, expressed in seedlings and newly formed crown roots. Highest expression in the scutellar node. Low to non detectable levels in cob, tassel and mature organs like husk or leaves.

It catalyses the reaction TRIBOA beta-D-glucoside + S-adenosyl-L-methionine = DIMBOA beta-D-glucoside + S-adenosyl-L-homocysteine + H(+). O-methyltransferase involved in the benzoxazinoid glucoside biosynthesis. Can use 2,4,7-trihydroxy-2H-1,4-benzoxazin-3(4H)-one 2-D-glucoside (TRIBOA-glucoside) as substrate, but not aglucone TRIBOA, caffeic acid, ferulic acid, apigenin or quercetin. The chain is TRIBOA-glucoside O-methyltransferase BX7 (BX7) from Zea mays (Maize).